The chain runs to 495 residues: MAVNVRDYIAENYGLFINGEFVKGSSDETIEVTNPATGETLSHITRAKDKDVDHAVKVAQEAFESWSLTSKSERAQMLRDIGDKLMAQKDKIAMIETLNNGKPIRETTAIDIPFAARHFHYFASVIETEEGTVNDIDKDTMSIVRHEPIGVVGAVVAWNFPMLLAAWKIAPAIAAGNTIVIQPSSSTPLSLLEVAKIFQEVLPKGVVNILTGKGSESGNAIFNHDGVDKLSFTGSTDVGYQVAEAAAKHLVPATLELGGKSANIILDDANLDLAVEGIQLGILFNQGEVCSAGSRLLVHEKIYDQLVPRLQEAFSNIKVGDPQDEATQMGSQTGKDQLDKIQSYIDAAKESDAQILAGGHRLTENGLDKGFFFEPTLIAVPDNHHKLAQEEIFGPVLTVIKVKDDQEAIDIANDSEYGLAGGVFSQNITRALNIAKAVRTGRIWINTYNQVPEGAPFGGYKKSGIGRETYKGALSNYQQVKNIYIDTSNALKGLY.

Gly212 to Gly218 contacts NAD(+). Active-site residues include Glu256 and Cys290.

Belongs to the aldehyde dehydrogenase family.

The enzyme catalyses an aldehyde + NAD(+) + H2O = a carboxylate + NADH + 2 H(+). In Staphylococcus aureus (strain Mu50 / ATCC 700699), this protein is Putative aldehyde dehydrogenase AldA (aldA).